Consider the following 331-residue polypeptide: Photosystem II assembly lipoprotein Ycf48 (331 aa).

The first 23 residues, 1–23, serve as a signal peptide directing secretion; the sequence is MIPVIRSFLSLLLCVGLTFGLGG. Cys-24 carries N-palmitoyl cysteine lipidation. Cys-24 carries the S-diacylglycerol cysteine lipid modification.

Belongs to the Ycf48 family. Part of early PSII assembly complexes which includes D1 (psbA) and PsbI; not found in mature PSII. Binds to the lumenal side of PSII complexes. Interacts with YidC.

The protein resides in the cellular thylakoid membrane. A factor required for optimal assembly of photosystem II (PSII), acting in the early stages of PSII assembly. Also plays a role in replacement of photodamaged D1 (psbA). Assists YidC in synthesis of chlorophyll-binding proteins. This Synechococcus sp. (strain RCC307) protein is Photosystem II assembly lipoprotein Ycf48.